Consider the following 436-residue polypeptide: Anaerobic glycerol-3-phosphate dehydrogenase subunit B (436 aa).

The protein belongs to the anaerobic G-3-P dehydrogenase subunit B family. Composed of a catalytic GlpA/B dimer and of membrane bound GlpC. The cofactor is FMN.

The catalysed reaction is a quinone + sn-glycerol 3-phosphate = dihydroxyacetone phosphate + a quinol. It participates in polyol metabolism; glycerol degradation via glycerol kinase pathway; glycerone phosphate from sn-glycerol 3-phosphate (anaerobic route): step 1/1. Functionally, conversion of glycerol 3-phosphate to dihydroxyacetone. Uses fumarate or nitrate as electron acceptor. The sequence is that of Anaerobic glycerol-3-phosphate dehydrogenase subunit B from Vibrio cholerae serotype O1 (strain ATCC 39315 / El Tor Inaba N16961).